An 81-amino-acid chain; its full sequence is Three-finger toxin MALT0051C (81 aa).

The signal sequence occupies residues 1-21 (MKTLLLTLVVVTVVCLDFGHT). Cystine bridges form between cysteine 24-cysteine 43, cysteine 38-cysteine 60, cysteine 62-cysteine 73, and cysteine 74-cysteine 79.

Belongs to the three-finger toxin family. Short-chain subfamily. Type I alpha-neurotoxin sub-subfamily. As to expression, expressed by the venom gland.

The protein localises to the secreted. Its function is as follows. Binds to muscle nicotinic acetylcholine receptor (nAChR) and inhibit acetylcholine from binding to the receptor, thereby impairing neuromuscular transmission. This chain is Three-finger toxin MALT0051C, found in Micrurus altirostris (Uruguayan coral snake).